We begin with the raw amino-acid sequence, 251 residues long: Probable transcriptional regulatory protein AAur_2300 (251 aa).

This sequence belongs to the TACO1 family.

The protein localises to the cytoplasm. This chain is Probable transcriptional regulatory protein AAur_2300, found in Paenarthrobacter aurescens (strain TC1).